The following is a 143-amino-acid chain: Ribosomal RNA large subunit methyltransferase H (143 aa).

S-adenosyl-L-methionine contacts are provided by residues G95 and 111-116 (FSDLTF).

The protein belongs to the RNA methyltransferase RlmH family. Homodimer.

The protein resides in the cytoplasm. It carries out the reaction pseudouridine(1915) in 23S rRNA + S-adenosyl-L-methionine = N(3)-methylpseudouridine(1915) in 23S rRNA + S-adenosyl-L-homocysteine + H(+). Specifically methylates the pseudouridine at position 1915 (m3Psi1915) in 23S rRNA. The protein is Ribosomal RNA large subunit methyltransferase H of Metamycoplasma arthritidis (strain 158L3-1) (Mycoplasma arthritidis).